A 521-amino-acid chain; its full sequence is uncharacterized protein (521 aa).

10 consecutive transmembrane segments (helical) span residues 103 to 123 (NLML…VPMP), 136 to 156 (FWFF…LWIT), 177 to 197 (YILF…FTAW), 200 to 220 (ITFT…GISF), 259 to 279 (AYAH…VYIV), 299 to 319 (IMYV…SSWI), 327 to 346 (YALV…VYVR), 358 to 378 (FVLV…LITM), 411 to 431 (CVAS…LHFG), and 450 to 470 (FKLT…ASYL).

The protein resides in the membrane. This is an uncharacterized protein from Schizosaccharomyces pombe (strain 972 / ATCC 24843) (Fission yeast).